Here is an 875-residue protein sequence, read N- to C-terminus: Cytosolic phospholipase A2 epsilon (875 aa).

The interval 16 to 70 (THASEGHHGLGTSMLVPKNPQGEEDSKLGRNCSGFEDAQDPQTAVPSSPLLSMAS) is disordered. One can recognise a C2 domain in the interval 60-183 (VPSSPLLSMA…CLRNKTHVKF (124 aa)). Low complexity predominate over residues 61–70 (PSSPLLSMAS). Ca(2+) is bound by residues D97, D103, D153, D155, and D161. The PLA2c domain occupies 332-875 (PCSDTLDVRL…KKRMRSQCPS (544 aa)). S420 functions as the Nucleophile in the catalytic mechanism. The active-site Proton acceptor is the D708. The residue at position 808 (S808) is a Phosphoserine. Residues 865–875 (EKKRMRSQCPS) form a required for localization at membrane structures region.

Requires Ca(2+) as cofactor. Predominantly expressed in brain, heart, skeletal muscle, testis and thyroid. Expressed in neurons but not astrocytes or microglia. Expressed at lower level in stomach.

Its subcellular location is the cytoplasm. The protein resides in the cytosol. It localises to the early endosome membrane. The protein localises to the lysosome membrane. It is found in the cell membrane. It catalyses the reaction a 1,2-diacyl-sn-glycero-3-phosphoethanolamine + a 1,2-diacyl-sn-glycero-3-phosphocholine = an N-acyl-1,2-diacyl-sn-glycero-3-phosphoethanolamine + a 2-acyl-sn-glycero-3-phosphocholine + H(+). The catalysed reaction is 1-hexadecanoyl-2-octadecanoyl-sn-glycero-3-phosphocholine + 1,2-di-(9Z-octadecenoyl)-sn-glycero-3-phosphoethanolamine = 2-octadecanoyl-sn-glycero-3-phosphocholine + N-hexadecanoyl-1,2-di-(9Z-octadecenoyl)-sn-glycero-3-phosphoethanolamine + H(+). It carries out the reaction 1-octadecanoyl-2-hexadecanoyl-sn-glycero-3-phosphocholine + 1,2-di-(9Z-octadecenoyl)-sn-glycero-3-phosphoethanolamine = N-octadecanoyl-1,2-di-(9Z-octadecenoyl)-sn-glycero-3-phosphoethanolamine + 2-hexadecanoyl-sn-glycero-3-phosphocholine + H(+). The enzyme catalyses 1,2-di-(9Z-octadecenoyl)-sn-glycero-3-phosphoethanolamine + 1,2-dihexadecanoyl-sn-glycero-3-phosphocholine = N-hexadecanoyl-1,2-di-(9Z-octadecenoyl)-sn-glycero-3-phosphoethanolamine + 2-hexadecanoyl-sn-glycero-3-phosphocholine + H(+). It catalyses the reaction 1,2-di-(5Z,8Z,11Z,14Z-eicosatetraenoyl)-sn-glycero-3-phosphocholine + 1,2-di-(9Z-octadecenoyl)-sn-glycero-3-phosphoethanolamine = N-(5Z,8Z,11Z,14Z-eicosatetraenoyl)-1,2-di-(9Z-octadecenoyl)-sn-glycero-3-phosphoethanolamine + 2-(5Z,8Z,11Z,14Z)-eicosatetraenoyl-sn-glycero-3-phosphocholine + H(+). The catalysed reaction is 2 1,2-di-(9Z-octadecenoyl)-sn-glycero-3-phosphoethanolamine = N,1,2-tri-(9Z-octadecenoyl)-sn-glycero-3-phosphoethanolamine + 2-(9Z-octadecenoyl)-sn-glycero-3-phosphoethanolamine + H(+). It carries out the reaction a 1,2-diacyl-sn-glycero-3-phosphocholine + H2O = a 1-acyl-sn-glycero-3-phosphocholine + a fatty acid + H(+). The enzyme catalyses 1-(1Z-octadecenyl)-2-(9Z-octadecenoyl)-sn-glycero-3-phosphoethanolamine + 1,2-dihexadecanoyl-sn-glycero-3-phosphocholine = 1-O-(1Z-octadecenoyl)-2-(9Z-octadecenoyl)-sn-glycero-3-phospho-N-hexadecanoyl-ethanolamine + 2-hexadecanoyl-sn-glycero-3-phosphocholine + H(+). It catalyses the reaction 1-hexadecanoyl-2-(5Z,8Z,11Z,14Z-eicosatetraenoyl)-sn-glycero-3-phosphocholine + H2O = 1-hexadecanoyl-sn-glycero-3-phosphocholine + (5Z,8Z,11Z,14Z)-eicosatetraenoate + H(+). The catalysed reaction is 1-hexadecanoyl-sn-glycero-3-phosphocholine + H2O = sn-glycerol 3-phosphocholine + hexadecanoate + H(+). With respect to regulation, stimulated by cytosolic Ca(2+). Stimulated by anionic phospholipids such as phosphatidylserine. In terms of biological role, calcium-dependent N-acyltransferase involved in the biosynthesis of N-acyl ethanolamines (NAEs) in the brain. Transfers the sn-1 fatty acyl chain of phosphatidylcholine (fatty acyl donor) to the amine group of phosphatidylethanolamine (fatty acyl acceptor) to generate N-acyl phosphatidylethanolamine (NAPE). Similarly can use plasmenylethanolamine as a fatty acyl acceptor to form N-acyl plasmenylethanolamine (N-Acyl-PlsEt). Both NAPE and N-Acyl-PlsEt can serve as precursors of bioactive NAEs like N-arachidonoyl phosphatidylethanolamine also called anandamide. Has weak phospholipase A2 and lysophospholipase activities. Regulates intracellular membrane trafficking that requires modulation of membrane curvature as it occurs by enrichment in lysophospholipids. Promotes tubule formation involved in clathrin-independent endocytotic trafficking and cargo recycling. The chain is Cytosolic phospholipase A2 epsilon (Pla2g4e) from Mus musculus (Mouse).